The chain runs to 227 residues: MRATPPRDDTYPSNENFKEKYPMSYVPIVIEQTSRGERAYDIYSRLLKERIIFVCGPIEDHMANLITAQLLFLEAENPEKDIYMYINSPGGVVTAGLAIYDTMQYIKPKVATLCIGQACSMGSFLLCGGEKGMRYSLPHSRVMIHQPSGGYRGQATDIEIHAQETLKIKKILNSLYSKHTGQDVKHVEKSMERDNFMSPEEAKKFGIIDKIITHRDIKLLKDKEQGQ.

S120 functions as the Nucleophile in the catalytic mechanism. The active site involves H145.

It belongs to the peptidase S14 family. As to quaternary structure, fourteen ClpP subunits assemble into 2 heptameric rings which stack back to back to give a disk-like structure with a central cavity, resembling the structure of eukaryotic proteasomes.

The protein localises to the cytoplasm. The enzyme catalyses Hydrolysis of proteins to small peptides in the presence of ATP and magnesium. alpha-casein is the usual test substrate. In the absence of ATP, only oligopeptides shorter than five residues are hydrolyzed (such as succinyl-Leu-Tyr-|-NHMec, and Leu-Tyr-Leu-|-Tyr-Trp, in which cleavage of the -Tyr-|-Leu- and -Tyr-|-Trp bonds also occurs).. In terms of biological role, cleaves peptides in various proteins in a process that requires ATP hydrolysis. Has a chymotrypsin-like activity. Plays a major role in the degradation of misfolded proteins. The chain is ATP-dependent Clp protease proteolytic subunit from Rickettsia bellii (strain RML369-C).